Consider the following 1108-residue polypeptide: Receptor-type guanylate cyclase gcy-20 (1108 aa).

Residues 1–15 (MRILLLLLQNILVFC) form the signal peptide. Over 16-474 (QFLQTIKVGL…ECPADFVKEY (459 aa)) the chain is Extracellular. 6 N-linked (GlcNAc...) asparagine glycosylation sites follow: N66, N131, N319, N341, N366, and N380. Residues 475–495 (LVYTIIAAFIVILALLAGCAG) form a helical membrane-spanning segment. Residues 483–803 (FIVILALLAG…IEQVRSHLNG (321 aa)) form the Protein kinase domain. ATP contacts are provided by residues 489-497 (LLAGCAGLL) and K571. Topologically, residues 496–1108 (LLYTMHMKRK…QAGDNNSETV (613 aa)) are cytoplasmic. The region spanning 876–1006 (TIFFSDVVQF…DAVNTASRME (131 aa)) is the Guanylate cyclase domain. Positions 1083 to 1108 (LEKNAEGSETSSLSVDQAGDNNSETV) are disordered. Polar residues predominate over residues 1089–1108 (GSETSSLSVDQAGDNNSETV).

Belongs to the adenylyl cyclase class-4/guanylyl cyclase family. In terms of tissue distribution, expressed asymmetrically in ASE left (ASEL) sensory neuron. Expressed in excretory gland and canal cell.

It localises to the cell membrane. It carries out the reaction GTP = 3',5'-cyclic GMP + diphosphate. In terms of biological role, guanylate cyclase involved in the production of the second messenger cGMP. This is Receptor-type guanylate cyclase gcy-20 from Caenorhabditis elegans.